Reading from the N-terminus, the 306-residue chain is UDP-N-acetylenolpyruvoylglucosamine reductase (306 aa).

The 165-residue stretch at 33–197 (TGGEADFYLS…LEAAFTLEPG (165 aa)) folds into the FAD-binding PCMH-type domain. Residue Arg176 is part of the active site. Catalysis depends on Ser226, which acts as the Proton donor. Residue Glu296 is part of the active site.

It belongs to the MurB family. FAD serves as cofactor.

The protein resides in the cytoplasm. It carries out the reaction UDP-N-acetyl-alpha-D-muramate + NADP(+) = UDP-N-acetyl-3-O-(1-carboxyvinyl)-alpha-D-glucosamine + NADPH + H(+). Its pathway is cell wall biogenesis; peptidoglycan biosynthesis. Cell wall formation. This is UDP-N-acetylenolpyruvoylglucosamine reductase from Staphylococcus epidermidis (strain ATCC 35984 / DSM 28319 / BCRC 17069 / CCUG 31568 / BM 3577 / RP62A).